A 103-amino-acid polypeptide reads, in one-letter code: Large ribosomal subunit protein uL24 (103 aa).

The protein belongs to the universal ribosomal protein uL24 family. Part of the 50S ribosomal subunit.

In terms of biological role, one of two assembly initiator proteins, it binds directly to the 5'-end of the 23S rRNA, where it nucleates assembly of the 50S subunit. One of the proteins that surrounds the polypeptide exit tunnel on the outside of the subunit. The protein is Large ribosomal subunit protein uL24 of Pediococcus pentosaceus (strain ATCC 25745 / CCUG 21536 / LMG 10740 / 183-1w).